A 729-amino-acid chain; its full sequence is Fatty acid oxidation complex subunit alpha (729 aa).

The enoyl-CoA hydratase/isomerase stretch occupies residues 1–189 (MLYKGDTLYV…KIGLIDGIVK (189 aa)). Asp-296 is a binding site for substrate. Positions 311 to 729 (EMPKQAAVLG…ARPVGALKTA (419 aa)) are 3-hydroxyacyl-CoA dehydrogenase. Residues Met-324, Asp-343, 400–402 (VVE), Lys-407, and Ser-429 each bind NAD(+). The active-site For 3-hydroxyacyl-CoA dehydrogenase activity is His-450. Asn-453 is an NAD(+) binding site. 2 residues coordinate substrate: Asn-500 and Tyr-660. The tract at residues 708–729 (RHNEPYYPPVEPARPVGALKTA) is disordered.

It in the N-terminal section; belongs to the enoyl-CoA hydratase/isomerase family. The protein in the C-terminal section; belongs to the 3-hydroxyacyl-CoA dehydrogenase family. In terms of assembly, heterotetramer of two alpha chains (FadB) and two beta chains (FadA).

It carries out the reaction a (3S)-3-hydroxyacyl-CoA + NAD(+) = a 3-oxoacyl-CoA + NADH + H(+). The enzyme catalyses a (3S)-3-hydroxyacyl-CoA = a (2E)-enoyl-CoA + H2O. It catalyses the reaction a 4-saturated-(3S)-3-hydroxyacyl-CoA = a (3E)-enoyl-CoA + H2O. The catalysed reaction is (3S)-3-hydroxybutanoyl-CoA = (3R)-3-hydroxybutanoyl-CoA. It carries out the reaction a (3Z)-enoyl-CoA = a 4-saturated (2E)-enoyl-CoA. The enzyme catalyses a (3E)-enoyl-CoA = a 4-saturated (2E)-enoyl-CoA. It functions in the pathway lipid metabolism; fatty acid beta-oxidation. Functionally, involved in the aerobic and anaerobic degradation of long-chain fatty acids via beta-oxidation cycle. Catalyzes the formation of 3-oxoacyl-CoA from enoyl-CoA via L-3-hydroxyacyl-CoA. It can also use D-3-hydroxyacyl-CoA and cis-3-enoyl-CoA as substrate. This Enterobacter sp. (strain 638) protein is Fatty acid oxidation complex subunit alpha.